We begin with the raw amino-acid sequence, 333 residues long: Mitochondrial 2-oxoglutarate/malate carrier protein (333 aa).

Solcar repeat units follow at residues 29–127, 136–227, and 236–325; these read FRLI…LFER, PGFL…SKQF, and DNIL…MNKA. A run of 6 helical transmembrane segments spans residues 30–61, 102–120, 138–159, 202–221, 241–259, and 300–319; these read RLIA…VQPL, GLSA…RLGI, FLLK…GTPA, GCIP…LASY, HFCA…SMPV, and GFTP…FIFL.

It belongs to the mitochondrial carrier (TC 2.A.29) family. Interacts with SMIM26.

It localises to the membrane. The catalysed reaction is (S)-malate(in) + 2-oxoglutarate(out) = (S)-malate(out) + 2-oxoglutarate(in). The enzyme catalyses malonate(in) + 2-oxoglutarate(out) = malonate(out) + 2-oxoglutarate(in). It carries out the reaction succinate(in) + 2-oxoglutarate(out) = succinate(out) + 2-oxoglutarate(in). It catalyses the reaction maleate(in) + 2-oxoglutarate(out) = maleate(out) + 2-oxoglutarate(in). The catalysed reaction is oxaloacetate(in) + 2-oxoglutarate(out) = oxaloacetate(out) + 2-oxoglutarate(in). Catalyzes the transport of 2-oxoglutarate (alpha-oxoglutarate) across the inner mitochondrial membrane in an electroneutral exchange for malate. Can also exchange 2-oxoglutarate for other dicarboxylic acids such as malonate, succinate, maleate and oxaloacetate, although with lower affinity. Contributes to several metabolic processes, including the malate-aspartate shuttle, the oxoglutarate/isocitrate shuttle, in gluconeogenesis from lactate, and in nitrogen metabolism. Maintains mitochondrial fusion and fission events, and the organization and morphology of cristae. Involved in the regulation of apoptosis. Helps protect from cytotoxic-induced apoptosis by modulating glutathione levels in mitochondria. The polypeptide is Mitochondrial 2-oxoglutarate/malate carrier protein (SLC25A11) (Sus scrofa (Pig)).